An 830-amino-acid polypeptide reads, in one-letter code: Ent-cassa-12,15-diene synthase (830 aa).

The interval 1–50 is disordered; that stretch reads MMLLGSPSSGGYGGKFAGASPAGGTTTMAPSAKQPSSRAPPPGITGGRND. The span at 23 to 37 shows a compositional bias: polar residues; the sequence is GGTTTMAPSAKQPSS. Mg(2+) contacts are provided by Asp577, Asp581, Asn721, and Glu729. Residues 577 to 581 carry the DDXXD motif motif; sequence DDLFD.

Belongs to the terpene synthase family. Mg(2+) serves as cofactor. In terms of tissue distribution, expressed in roots and stems.

It carries out the reaction ent-copalyl diphosphate = ent-cassa-12,15-diene + diphosphate. Functionally, involved in phytocassane phytoalexins biosynthesis. Catalyzes the conversion of ent-copalyl diphosphate to the phytoalexin precursor ent-cassa-12,15-diene. This Oryza sativa subsp. indica (Rice) protein is Ent-cassa-12,15-diene synthase (KSL7).